We begin with the raw amino-acid sequence, 60 residues long: Large ribosomal subunit protein uL30 (60 aa).

The protein belongs to the universal ribosomal protein uL30 family. In terms of assembly, part of the 50S ribosomal subunit.

In Streptomyces filamentosus (Streptomyces roseosporus), this protein is Large ribosomal subunit protein uL30.